A 248-amino-acid chain; its full sequence is Granzyme C (248 aa).

A signal peptide spans 1 to 18; sequence MPPVLILLTLLLPLRAGA. The propeptide occupies 19 to 20; sequence EE. Positions 21–246 constitute a Peptidase S1 domain; that stretch reads IIGGNEISPH…FVSWIKKTMK (226 aa). Cysteines 50 and 66 form a disulfide. Active-site charge relay system residues include His-65 and Asp-109. 2 disulfide bridges follow: Cys-143-Cys-210 and Cys-174-Cys-189. Ser-204 serves as the catalytic Charge relay system.

This sequence belongs to the peptidase S1 family. Granzyme subfamily.

It is found in the cytolytic granule. Functionally, this enzyme is probably necessary for target cell lysis in cell-mediated immune responses. This Mus musculus (Mouse) protein is Granzyme C (Gzmc).